The primary structure comprises 280 residues: Eukaryotic translation initiation factor 3 subunit F-1 (280 aa).

In terms of domain architecture, MPN spans 8–138 (VRVHPVVLFQ…LRAYICIQLG (131 aa)).

It belongs to the eIF-3 subunit F family. As to quaternary structure, component of the eukaryotic translation initiation factor 3 (eIF-3) complex. The eIF-3 complex interacts with pix.

It is found in the cytoplasm. Component of the eukaryotic translation initiation factor 3 (eIF-3) complex, which is involved in protein synthesis of a specialized repertoire of mRNAs and, together with other initiation factors, stimulates binding of mRNA and methionyl-tRNAi to the 40S ribosome. The eIF-3 complex specifically targets and initiates translation of a subset of mRNAs involved in cell proliferation. This is Eukaryotic translation initiation factor 3 subunit F-1 from Drosophila mojavensis (Fruit fly).